A 365-amino-acid polypeptide reads, in one-letter code: Putrescine carbamoyltransferase (365 aa).

Carbamoyl phosphate-binding positions include Ser54–Arg58, Arg105, and His132. His277–Pro280 serves as a coordination point for putrescine.

This sequence belongs to the aspartate/ornithine carbamoyltransferase superfamily. PTCase family. Homotrimer.

The protein localises to the cytoplasm. It carries out the reaction carbamoyl phosphate + putrescine = N-carbamoylputrescine + phosphate + H(+). It participates in amine and polyamine biosynthesis; putrescine biosynthesis via agmatine pathway; putrescine from N-carbamoylputrescine (transferase route): step 1/1. In terms of biological role, catalyzes the phosphorolysis of N-carbamoylputrescine to form carbamoyl phosphate and putrescine. Is involved in the degradation pathway of the polyamine agmatine. In Mycoplasma capricolum subsp. capricolum (strain California kid / ATCC 27343 / NCTC 10154), this protein is Putrescine carbamoyltransferase.